A 1226-amino-acid chain; its full sequence is MGYPPPTRRLGDKKRYHYSNNPNRRHPSAVYSKNSFPKSSNNGFVSSPTADNSTNPSVTPSTASVPLPTAAPGSTFGIEAPRPSRYDPSSVSRPSSSSYSSTRKIGSRYNPDVERSSSTTSSTPESMNTSTITHTNTDIGNSRYSRKTMSRYNPQSTSSTNVTHFPSALSNAPPFYVANGSSRRPRSMDDYSPDVTNKLETNNVSSVNNNSPHSYYSRSNKWRSIGTPSRPPFDNHVGNMTTTSNTNSIHQREPFWKANSTTILKSTHSQSSPSLHTKKFHDANKLDKPEASVKVETPSKDETKAISYHDNNFPPRKSVSKPNAPLEPDNIKVGEEDALGKKEVHKSGREIAKEHPTPVKMKEHDELEARAKKVSKINIDGKQDEIWTTAKTVASAVEVSKESQKELTRSVERKESPEIRDYERAYDPKALKTDVTKLTVDNDNKSYEEPLEKVEGCIFPLPKAETRLWELKNQKRNKIISEQKYLLKKAIRNFSEYPFYAQNKLIHQQATGLILTKIISKIKKEEHLKKINLKHDYFDLQKKYEKECEILTKLSENLRKEEIENKRKEHELMEQKRREEGIETEKEKSLRHPSSSSSSRRRNRADFVDDAEMENVLLQIDPNYKHYQAAATIPPLILDPIRKHSYKFCDVNNLVTDKKLWASRILKDASDNFTDHEHSLFLEGYLIHPKKFGKISHYMGGLRSPEECVLHYYRTKKTVNYKQLLIDKNKKRKMSAAAKRRKRKERSNDEEVEVDESKEESTNTIEKEEKSENNAEENVQPVLVQGSEVKGDPLGTPEKVENMIEQRGEEFAGELENAERVNDLKRAHDEVGEESNKSSVIETNNGVQIMDPKGAVQNGYYPEETKELDFSLENALQRKKHKSAPEHKTSYWSVRESQLFPELLKEFGSQWSLISEKLGTKSTTMVRNYYQRNAARNGWKLLVDETDLKRDGTSSESVQQSQILIQPERPNINAYSNIPPQQRPALGYFVGQPTHGHNTSISSIDGSIRPFGPDFHRDTFSKISAPLTTLPPPRLPSIQFPRSEMAEPTVTDLRNRPLDHIDTLADAASSVTNNQNFSNERNAIDIGRKSTTISNLLNNSDRSMKSSFQSASRHEAQLEDTPSMNNIVVQEIKPNITTPRSSSISALLNPVNGNGQSNPDGRPLLPFQHAISQGTPTFPLPAPRTSPISRAPPKFNFSNDPLAALAAVASAPDAMSSFLSKKENNN.

Disordered regions lie at residues 1–219 (MGYP…YSRS) and 264–331 (LKST…PDNI). Basic residues predominate over residues 11-27 (GDKKRYHYSNNPNRRHP). Residues 31 to 64 (YSKNSFPKSSNNGFVSSPTADNSTNPSVTPSTAS) show a composition bias toward polar residues. Composition is skewed to low complexity over residues 81–103 (PRPSRYDPSSVSRPSSSSYSSTR) and 116–131 (SSSTTSSTPESMNTST). Composition is skewed to polar residues over residues 132–143 (ITHTNTDIGNSR) and 150–170 (SRYNPQSTSSTNVTHFPSALS). S187 carries the phosphoserine modification. Low complexity predominate over residues 202 to 211 (NNVSSVNNNS). Residues 264 to 275 (LKSTHSQSSPSL) are compositionally biased toward polar residues. Positions 280–304 (FHDANKLDKPEASVKVETPSKDETK) are enriched in basic and acidic residues. Phosphoserine is present on S395. A coiled-coil region spans residues 539-591 (DLQKKYEKECEILTKLSENLRKEEIENKRKEHELMEQKRREEGIETEKEKSLR). A compositionally biased stretch (basic and acidic residues) spans 569–590 (EHELMEQKRREEGIETEKEKSL). A disordered region spans residues 569 to 605 (EHELMEQKRREEGIETEKEKSLRHPSSSSSSRRRNRA). One can recognise an SANT domain in the interval 668–720 (DASDNFTDHEHSLFLEGYLIHPKKFGKISHYMGGLRSPEECVLHYYRTKKTVN). The segment covering 732 to 745 (RKMSAAAKRRKRKE) has biased composition (basic residues). The interval 732 to 796 (RKMSAAAKRR…SEVKGDPLGT (65 aa)) is disordered. Over residues 748 to 758 (NDEEVEVDESK) the composition is skewed to acidic residues. A compositionally biased stretch (basic and acidic residues) spans 759–773 (EESTNTIEKEEKSEN). The residue at position 796 (T796) is a Phosphothreonine. Residues 884-938 (APEHKTSYWSVRESQLFPELLKEFGSQWSLISEKLGTKSTTMVRNYYQRNAARNG) enclose the HTH myb-type domain. Residues 911 to 934 (WSLISEKLGTKSTTMVRNYYQRNA) constitute a DNA-binding region (H-T-H motif). The residue at position 1037 (S1037) is a Phosphoserine. A disordered region spans residues 1172 to 1194 (SQGTPTFPLPAPRTSPISRAPPK).

As to quaternary structure, identified in a Set3C complex with SET3, HST1, HOS2, SIF2, CPR1 and HOS4.

It is found in the nucleus. Its function is as follows. Part of the Set3C complex, which is required to repress early/middle sporulation genes during meiosis. This is Probable DNA-binding protein SNT1 (SNT1) from Saccharomyces cerevisiae (strain ATCC 204508 / S288c) (Baker's yeast).